The chain runs to 324 residues: 4-hydroxy-3-methylbut-2-enyl diphosphate reductase (324 aa).

A [4Fe-4S] cluster-binding site is contributed by C13. (2E)-4-hydroxy-3-methylbut-2-enyl diphosphate-binding residues include H41 and H75. Residues H41 and H75 each contribute to the dimethylallyl diphosphate site. The isopentenyl diphosphate site is built by H41 and H75. C97 serves as a coordination point for [4Fe-4S] cluster. Residue H125 participates in (2E)-4-hydroxy-3-methylbut-2-enyl diphosphate binding. H125 lines the dimethylallyl diphosphate pocket. H125 contacts isopentenyl diphosphate. E127 functions as the Proton donor in the catalytic mechanism. A (2E)-4-hydroxy-3-methylbut-2-enyl diphosphate-binding site is contributed by T168. C225 lines the [4Fe-4S] cluster pocket. (2E)-4-hydroxy-3-methylbut-2-enyl diphosphate-binding residues include S253, S254, N255, and S302. 4 residues coordinate dimethylallyl diphosphate: S253, S254, N255, and S302. Isopentenyl diphosphate-binding residues include S253, S254, N255, and S302.

Belongs to the IspH family. Requires [4Fe-4S] cluster as cofactor.

It carries out the reaction isopentenyl diphosphate + 2 oxidized [2Fe-2S]-[ferredoxin] + H2O = (2E)-4-hydroxy-3-methylbut-2-enyl diphosphate + 2 reduced [2Fe-2S]-[ferredoxin] + 2 H(+). The catalysed reaction is dimethylallyl diphosphate + 2 oxidized [2Fe-2S]-[ferredoxin] + H2O = (2E)-4-hydroxy-3-methylbut-2-enyl diphosphate + 2 reduced [2Fe-2S]-[ferredoxin] + 2 H(+). It functions in the pathway isoprenoid biosynthesis; dimethylallyl diphosphate biosynthesis; dimethylallyl diphosphate from (2E)-4-hydroxy-3-methylbutenyl diphosphate: step 1/1. The protein operates within isoprenoid biosynthesis; isopentenyl diphosphate biosynthesis via DXP pathway; isopentenyl diphosphate from 1-deoxy-D-xylulose 5-phosphate: step 6/6. Functionally, catalyzes the conversion of 1-hydroxy-2-methyl-2-(E)-butenyl 4-diphosphate (HMBPP) into a mixture of isopentenyl diphosphate (IPP) and dimethylallyl diphosphate (DMAPP). Acts in the terminal step of the DOXP/MEP pathway for isoprenoid precursor biosynthesis. The sequence is that of 4-hydroxy-3-methylbut-2-enyl diphosphate reductase from Chlorobium limicola (strain DSM 245 / NBRC 103803 / 6330).